The chain runs to 162 residues: Transcription elongation factor GreA (162 aa).

Positions 45–74 form a coiled coil; that stretch reads ENAEYEAAREKQAFIEGRIKELEDMTARAE.

This sequence belongs to the GreA/GreB family.

Its function is as follows. Necessary for efficient RNA polymerase transcription elongation past template-encoded arresting sites. The arresting sites in DNA have the property of trapping a certain fraction of elongating RNA polymerases that pass through, resulting in locked ternary complexes. Cleavage of the nascent transcript by cleavage factors such as GreA or GreB allows the resumption of elongation from the new 3'terminus. GreA releases sequences of 2 to 3 nucleotides. In Rickettsia typhi (strain ATCC VR-144 / Wilmington), this protein is Transcription elongation factor GreA.